The primary structure comprises 382 residues: Neuropeptide Y receptor type 2 (382 aa).

Residues 1–39 (MGPIGAEADENQTVEEMKMEPSGPGHTTPRGELAPDSEP) are disordered. At 1–46 (MGPIGAEADENQTVEEMKMEPSGPGHTTPRGELAPDSEPELKDSTK) the chain is on the extracellular side. Asn11 carries an N-linked (GlcNAc...) asparagine glycan. A helical membrane pass occupies residues 47–67 (LIEVQIILILAYCSIILLGVV). Topologically, residues 68-87 (GNSLVIHVVIKFKSMRTVTN) are cytoplasmic. Residues 88 to 108 (FFIANLAVADLLVNTLCLPFT) traverse the membrane as a helical segment. The Extracellular portion of the chain corresponds to 109–125 (LTYTLMGEWKMGPVLCH). Cys124 and Cys204 are disulfide-bonded. Residues 126-146 (LVPYAQGLAVQVSTITLTVIA) form a helical membrane-spanning segment. Residues 147-166 (LDRHRCIVYHLESKISKRIS) lie on the Cytoplasmic side of the membrane. Residues 167–187 (FLIIGLAWGISALLASPLAIF) traverse the membrane as a helical segment. At 188–217 (REYSLIEIIPDFEIVACTEKWPGEEKSIYG) the chain is on the extracellular side. Residues 218–238 (TVYSLSSLLILYVLPLGIISF) form a helical membrane-spanning segment. The Cytoplasmic segment spans residues 239-269 (SYARIWSKLKNHVSPGGVNDHYHQRRQKTTK). A helical membrane pass occupies residues 270–290 (MLVCVVVVFAVSWLPLHAFQL). Residues 291-305 (AVDIDSQVLDLKEYK) lie on the Extracellular side of the membrane. Residues 306–326 (LIFTVFHIIAMCSTFANPLLY) traverse the membrane as a helical segment. At 327–382 (GWMNSNYRKAFLSAFRCEQRLDAIHSEVSMTSKAKKNLEATKNGGPDDSFTEATNV) the chain is on the cytoplasmic side. The S-palmitoyl cysteine moiety is linked to residue Cys343. Positions 363-382 (NLEATKNGGPDDSFTEATNV) are disordered.

It belongs to the G-protein coupled receptor 1 family.

It is found in the cell membrane. Receptor for neuropeptide Y and peptide YY. The protein is Neuropeptide Y receptor type 2 (NPY2R) of Sus scrofa (Pig).